Here is a 366-residue protein sequence, read N- to C-terminus: Aminomethyltransferase (366 aa).

This sequence belongs to the GcvT family. The glycine cleavage system is composed of four proteins: P, T, L and H.

The catalysed reaction is N(6)-[(R)-S(8)-aminomethyldihydrolipoyl]-L-lysyl-[protein] + (6S)-5,6,7,8-tetrahydrofolate = N(6)-[(R)-dihydrolipoyl]-L-lysyl-[protein] + (6R)-5,10-methylene-5,6,7,8-tetrahydrofolate + NH4(+). Its function is as follows. The glycine cleavage system catalyzes the degradation of glycine. This Bordetella pertussis (strain Tohama I / ATCC BAA-589 / NCTC 13251) protein is Aminomethyltransferase.